The sequence spans 449 residues: Guanine/hypoxanthine permease GhxP (449 aa).

Topologically, residues 1-25 (MSTPSARTGGSLDAWFKISQRGSTV) are cytoplasmic. The chain crosses the membrane as a helical span at residues 26–49 (RQEVVAGLTTFLAMVYSVIVVPGM). Residues 50 to 59 (LGKAGFPPAA) are Periplasmic-facing. The helical transmembrane segment at 60 to 78 (VFVATCLVAGLGSIVMGLW) threads the bilayer. Residues 79–80 (AN) lie on the Cytoplasmic side of the membrane. The discontinuously helical transmembrane segment at 81 to 97 (LPLAIGCAISLTAFTAF) threads the bilayer. Residues 98–109 (SLVLGQHISVPV) lie on the Periplasmic side of the membrane. The helical transmembrane segment at 110 to 129 (ALGAVFLMGVLFTVISATGI) threads the bilayer. Topologically, residues 130–141 (RSWILRNLPHGV) are cytoplasmic. The chain crosses the membrane as a helical span at residues 142–162 (AHGTGIGIGLFLLLIAANGVG). Residues 163–180 (LVIKNPLDGLPVALGDFA) lie on the Periplasmic side of the membrane. A helical transmembrane segment spans residues 181 to 198 (TFPVIMSLVGLAVIIGLE). The Cytoplasmic segment spans residues 199-202 (KLKV). Residues 203-222 (PGGILLTIIGISIVGLIFDP) form a helical membrane-spanning segment. The Periplasmic portion of the chain corresponds to 223–254 (NVHFSGVFAMPSLSDENGNSLIGSLDIMGALN). A helical membrane pass occupies residues 255 to 283 (PVVLPSVLALVMTAVFDATGTIRAVAGQA). At 284–296 (NLLDKDGQIIDGG) the chain is on the cytoplasmic side. The helical transmembrane segment at 297–312 (KALTTDSMSSVFSGLV) threads the bilayer. The Periplasmic portion of the chain corresponds to 313 to 314 (GA). The discontinuously helical transmembrane segment at 315-330 (APAAVYIESAAGTAAG) threads the bilayer. The Cytoplasmic segment spans residues 331 to 334 (GKTG). A helical transmembrane segment spans residues 335-349 (LTAITVGVLFLLILF). The Periplasmic portion of the chain corresponds to 350–360 (LSPLSYLVPGY). The helical transmembrane segment at 361–380 (ATAPALMYVGLLMLSNVAKI) threads the bilayer. Residues 381–385 (DFADF) are Cytoplasmic-facing. An intramembrane region (discontinuously helical) is located at residues 386 to 421 (VDAMAGLVTAVFIVLTCNIVTGIMIGFATLVIGRLV). The Cytoplasmic segment spans residues 422–449 (SGEWRKLNIGTVVIAVALVTFYAGGWAI).

The protein belongs to the nucleobase:cation symporter-2 (NCS2) (TC 2.A.40) family. Azg-like subfamily.

It is found in the cell inner membrane. Its function is as follows. High-affinity transporter for guanine and hypoxanthine. This is Guanine/hypoxanthine permease GhxP (ghxP) from Escherichia coli O157:H7.